We begin with the raw amino-acid sequence, 248 residues long: MVKLAFGSLGDSFSATSVKAYVAEFIATLLFVFAGVGSAIAYGQLTNGGALDPAGLVAIAIAHALALFVGVSVAANISGGHLNPAVTFGLAVGGHITILTGLFYWIAQLLGASIACLLLKFVTHGKAIPTHGVAGISELEGVVMEIVITFALVYTVYATAADPKKGSLGTIAPIAIGFIVGANILAAGPFSGGSMNPARSFGPAVAAGNFAGNWVYWVGPLIGGGLAGLVYGDVFIGSYQPVADQDYA.

Transmembrane regions (helical) follow at residues Ala-20 to Ile-40 and Ala-54 to Ala-74. An NPA 1 motif is present at residues Asn-83–Ala-85. Transmembrane regions (helical) follow at residues Thr-97–Leu-119, Gly-141–Ala-161, and Leu-168–Gly-188. The NPA 2 motif lies at Asn-196–Ala-198. A helical membrane pass occupies residues Trp-217–Gly-237.

It belongs to the MIP/aquaporin (TC 1.A.8) family. TIP (TC 1.A.8.10) subfamily. In terms of tissue distribution, expressed in roots and anthers.

Its subcellular location is the vacuole membrane. Aquaporins facilitate the transport of water and small neutral solutes across cell membranes. May be involved in transport from the vacuolar compartment to the cytoplasm. This is Probable aquaporin TIP2-1 (TIP2-1) from Oryza sativa subsp. japonica (Rice).